The sequence spans 55 residues: Serine protease inhibitor Kazal-type 1 (55 aa).

The region spanning 2–55 (QGRDANCNYEFPGCPRNLEPVCGTDGNTYNNECLLCMENKKRDVPIRIQKDGPC) is the Kazal-like domain. 3 disulfides stabilise this stretch: Cys-8–Cys-37, Cys-15–Cys-34, and Cys-23–Cys-55.

Its subcellular location is the secreted. Its function is as follows. Serine protease inhibitor which exhibits anti-trypsin activity. In the pancreas, protects against trypsin-catalyzed premature activation of zymogens. In terms of biological role, in the male reproductive tract, binds to sperm heads where it modulates sperm capacitance by inhibiting calcium uptake and nitrogen oxide (NO) production. This is Serine protease inhibitor Kazal-type 1 (SPINK1) from Monodelphis domestica (Gray short-tailed opossum).